The following is a 272-amino-acid chain: Troponin T, fast skeletal muscle (272 aa).

Positions 1–50 (MSDEETEQVEEQYEEEEEAQEEEVQEEAPEPEEVQEDAVAEEEREEDEEE) are enriched in acidic residues. Positions 1 to 75 (MSDEETEQVE…EKVDFDDIQK (75 aa)) are disordered. S2 carries the post-translational modification N-acetylserine. S2 is subject to Phosphoserine. Positions 63-75 (PEGEKVDFDDIQK) are enriched in basic and acidic residues. Phosphoserine is present on S91. The segment covering 114 to 156 (RAERAEQQRIRAEKEREPQNRLAEEKARREEEDAKRRAEDDMK) has biased composition (basic and acidic residues). The tract at residues 114-193 (RAERAEQQRI…TAREMKKKIL (80 aa)) is disordered. Phosphoserine occurs at positions 162, 169, and 170. The segment covering 184–193 (TAREMKKKIL) has biased composition (basic and acidic residues). Phosphoserine is present on S206. Residue Y222 is modified to Phosphotyrosine. Residues 248–272 (RIDQAQKHSKKAGATAKGKVGGRWK) form a disordered region.

Belongs to the troponin T family. As to expression, expressed predominantly in skeletal muscle.

Its function is as follows. Troponin T is the tropomyosin-binding subunit of troponin, the thin filament regulatory complex which confers calcium-sensitivity to striated muscle actomyosin ATPase activity. The sequence is that of Troponin T, fast skeletal muscle (Tnnt3) from Mus musculus (Mouse).